Here is a 439-residue protein sequence, read N- to C-terminus: MMAVPSRCSLGVAPLVAMVGGGQLARMTHQAAIALGQTLRVLATAADEPAAQVTPDVVIGSHTDLEDLRRVALGADALTFDHEHVPTELLDKLVAEGINVAPSPQALVHAQDKLVMRRRLAALGAAMPRFMALDSVDDLAEIDAFAQRLTGSKDAPMVVKAVRGGYDGRGVQMVRDSAHAREVASGYLVDGMPVLVEERVELRRELSALVARSPFGQGAAWPVVETVQRDGICVLVVAPALALADDLASAAQQLALRLAAELGVVGVFAVELFETADGALLVNELAMRPHNSGHWTMDGARTSQFEQHLRAVLDYPLGETDAVAPVTVMVNVLGAPQPPTLSVVTMDERLHHLFARMPDARVHLYDKVERPGRKVGHINFRGTDKDRKNPTKLRERAELAAHWLSHGQWTDGWDPHRAGDDVVEISLACGGRNDAQRQR.

ATP is bound by residues Lys-113, Lys-160, 197-200 (EERV), Glu-205, and 283-284 (NE). The ATP-grasp domain occupies 117-313 (RRRLAALGAA…QFEQHLRAVL (197 aa)).

The protein belongs to the PurK/PurT family. In terms of assembly, homodimer.

The catalysed reaction is 5-amino-1-(5-phospho-beta-D-ribosyl)imidazole + hydrogencarbonate + ATP = 5-carboxyamino-1-(5-phospho-D-ribosyl)imidazole + ADP + phosphate + 2 H(+). The protein operates within purine metabolism; IMP biosynthesis via de novo pathway; 5-amino-1-(5-phospho-D-ribosyl)imidazole-4-carboxylate from 5-amino-1-(5-phospho-D-ribosyl)imidazole (N5-CAIR route): step 1/2. In terms of biological role, catalyzes the ATP-dependent conversion of 5-aminoimidazole ribonucleotide (AIR) and HCO(3)(-) to N5-carboxyaminoimidazole ribonucleotide (N5-CAIR). This is N5-carboxyaminoimidazole ribonucleotide synthase from Mycobacterium leprae (strain TN).